The following is a 246-amino-acid chain: MTTFSVPIDNGDSMKIAEEESQRTLYPYVTGTSIVAIKYKDGVLMASDMGGSYGSTLRYKNIERVKAIGKHSLLGASGEISDFQEILRYLDELTLNDNMWDDGNSLGPKEIHNYLTRVMYNRRNKFNPLWNTLVLGGVKNGKSYLGMVSMIGVSFEDDHVATGFGNHLARPILRDEWHADLSFEDGVKLLEKCMRVLLYRDRSAINKLQIAKITEEGVTVSQPYSLKTYWEFSSFHNPTAGAAGSW.

The propeptide occupies 1–23; that stretch reads MTTFSVPIDNGDSMKIAEEESQR. Thr-24 (nucleophile) is an active-site residue.

It belongs to the peptidase T1B family. As to quaternary structure, component of the 20S core complex of the 26S proteasome. The 26S proteasome is composed of a core protease (CP), known as the 20S proteasome, capped at one or both ends by the 19S regulatory particle (RP/PA700). The 20S proteasome core is composed of 28 subunits that are arranged in four stacked rings, resulting in a barrel-shaped structure. The two end rings are each formed by seven alpha subunits, and the two central rings are each formed by seven beta subunits. The catalytic chamber with the active sites is on the inside of the barrel. Ubiquitous low levels, higher expression in siliques and flowers.

Its subcellular location is the cytoplasm. It localises to the nucleus. Functionally, non-catalytic component of the proteasome, a multicatalytic proteinase complex which is characterized by its ability to cleave peptides with Arg, Phe, Tyr, Leu, and Glu adjacent to the leaving group at neutral or slightly basic pH. The proteasome has an ATP-dependent proteolytic activity. This is Proteasome subunit beta type-4 (PBG1) from Arabidopsis thaliana (Mouse-ear cress).